Here is a 405-residue protein sequence, read N- to C-terminus: Arginine biosynthesis bifunctional protein ArgJ (405 aa).

Substrate-binding residues include Thr167, Lys190, Thr201, Glu281, Asn400, and Ser405. Thr201 functions as the Nucleophile in the catalytic mechanism.

This sequence belongs to the ArgJ family. In terms of assembly, heterotetramer of two alpha and two beta chains.

It localises to the cytoplasm. It catalyses the reaction N(2)-acetyl-L-ornithine + L-glutamate = N-acetyl-L-glutamate + L-ornithine. The catalysed reaction is L-glutamate + acetyl-CoA = N-acetyl-L-glutamate + CoA + H(+). Its pathway is amino-acid biosynthesis; L-arginine biosynthesis; L-ornithine and N-acetyl-L-glutamate from L-glutamate and N(2)-acetyl-L-ornithine (cyclic): step 1/1. It functions in the pathway amino-acid biosynthesis; L-arginine biosynthesis; N(2)-acetyl-L-ornithine from L-glutamate: step 1/4. Its function is as follows. Catalyzes two activities which are involved in the cyclic version of arginine biosynthesis: the synthesis of N-acetylglutamate from glutamate and acetyl-CoA as the acetyl donor, and of ornithine by transacetylation between N(2)-acetylornithine and glutamate. This Nocardia farcinica (strain IFM 10152) protein is Arginine biosynthesis bifunctional protein ArgJ.